Here is a 367-residue protein sequence, read N- to C-terminus: Alginate lyase (367 aa).

The first 27 residues, 1–27 (MKTSHLIRIALPGALAAALLASQVSQA), serve as a signal peptide directing secretion. Substrate is bound by residues 65–66 (SK), 138–139 (HT), and Tyr-256.

The protein belongs to the polysaccharide lyase 5 family.

Its subcellular location is the periplasm. The catalysed reaction is Eliminative cleavage of alginate to give oligosaccharides with 4-deoxy-alpha-L-erythro-hex-4-enuronosyl groups at their non-reducing ends and beta-D-mannuronate at their reducing end.. Functionally, catalyzes the depolymerization of alginate by cleaving the beta-1,4 glycosidic bond between two adjacent sugar residues via a beta-elimination mechanism. May serve to degrade mislocalized alginate that is trapped in the periplasmic space. Acts preferentially on non-acetylated alginate or its precursor mannuronan. Is able to catalyze cleavage adjacent to either mannuronate or guluronate residues in alginate. Exhaustive digestion of alginate by AlgL generates dimeric and trimeric products. In addition to its enzymatic function, AlgL appears to be required for alginate export, maybe as part of a multi-protein alginate-secretion complex. The polypeptide is Alginate lyase (Pseudomonas aeruginosa (strain ATCC 15692 / DSM 22644 / CIP 104116 / JCM 14847 / LMG 12228 / 1C / PRS 101 / PAO1)).